Here is a 179-residue protein sequence, read N- to C-terminus: dCTP deaminase (179 aa).

Residues 101 to 106 (RSTLAR) and D117 each bind dCTP. E127 acts as the Proton donor/acceptor in catalysis. DCTP is bound at residue Q165.

This sequence belongs to the dCTP deaminase family. In terms of assembly, homotrimer.

The catalysed reaction is dCTP + H2O + H(+) = dUTP + NH4(+). The protein operates within pyrimidine metabolism; dUMP biosynthesis; dUMP from dCTP (dUTP route): step 1/2. Catalyzes the deamination of dCTP to dUTP. This Caldivirga maquilingensis (strain ATCC 700844 / DSM 13496 / JCM 10307 / IC-167) protein is dCTP deaminase.